The sequence spans 741 residues: NAD(P)H-quinone oxidoreductase subunit 5, chloroplastic (741 aa).

Helical transmembrane passes span 9 to 29 (WIIP…LLLF), 40 to 60 (WAVP…ELAI), 89 to 109 (IDPL…LVLI), 125 to 145 (FSYL…SNLI), 147 to 167 (IYIF…FWFA), 185 to 205 (GDFG…SFEF), 219 to 239 (NGVN…GAVA), 258 to 278 (TPIS…FLVA), 280 to 300 (LLPL…IGVI), 327 to 347 (LGYI…FHLI), 396 to 416 (TTFF…CFWS), 425 to 445 (WLYS…TAFY), 547 to 567 (LLPL…GIPF), 606 to 626 (ILSV…YGSV), and 721 to 741 (SYIF…YFFI).

Belongs to the complex I subunit 5 family. As to quaternary structure, NDH is composed of at least 16 different subunits, 5 of which are encoded in the nucleus.

The protein localises to the plastid. Its subcellular location is the chloroplast thylakoid membrane. It carries out the reaction a plastoquinone + NADH + (n+1) H(+)(in) = a plastoquinol + NAD(+) + n H(+)(out). It catalyses the reaction a plastoquinone + NADPH + (n+1) H(+)(in) = a plastoquinol + NADP(+) + n H(+)(out). Functionally, NDH shuttles electrons from NAD(P)H:plastoquinone, via FMN and iron-sulfur (Fe-S) centers, to quinones in the photosynthetic chain and possibly in a chloroplast respiratory chain. The immediate electron acceptor for the enzyme in this species is believed to be plastoquinone. Couples the redox reaction to proton translocation, and thus conserves the redox energy in a proton gradient. The chain is NAD(P)H-quinone oxidoreductase subunit 5, chloroplastic (ndhF) from Ceratophyllum demersum (Rigid hornwort).